We begin with the raw amino-acid sequence, 224 residues long: MKNQYVPVITLDGPSASGKGTIARLVSQALGFHYLDSGALYRLVALAAMKRGVDAGDEQGVVGIARSLDVSFADSSIRLDGIDVSDEIRAEACGEYASKIAQYSALRVELLERQRDLRKLPGLVADGRDMGSVIFPDATLKIYLTANEEERARRRHKQLMEKGINASIAHLVLALRERDERDSKRVASPLQQCEDTRLLDTTGLNIDQVVGKVLGMYADSGSIE.

G13 to T21 is an ATP binding site.

Belongs to the cytidylate kinase family. Type 1 subfamily.

Its subcellular location is the cytoplasm. It catalyses the reaction CMP + ATP = CDP + ADP. The catalysed reaction is dCMP + ATP = dCDP + ADP. This Nitrosomonas eutropha (strain DSM 101675 / C91 / Nm57) protein is Cytidylate kinase.